The primary structure comprises 514 residues: MTLQEEIKKRRTFAIISHPDAGKTTITEQLLYFGGEIREAGTVKGKKTGNFAKSDWMDIEKQRGISVTSSVMQFDYDGKRVNILDTPGHEDFSEDTYRTLMAVDAAVMVIDSAKGIEAQTKKLFEVVKHRNIPVFTFMNKLDRDGREPLDLLEELEEILGIASYPMNWPIGMGKSFEGLYDLYNERLELYKGEERFATLAEGDQLFASNPFYEQVKEDIELLSEAGNEFSEEAILEGKLTPVFFGSALTNFGVQTFLETFLKFAPEPHGHKKTDGEVVEPLSPDFSGFVFKIQANMDPRHRDRIAFVRIVSGEFERGMSVNLPRTSKSAKLSNVTQFMAESRENVTNAVAGDIIGVYDTGTYQVGDTLTVGKNKFEFEPLPTFTPEIFMKVSAKNVMKQKSFHKGIEQLVQEGAIQLYTNYQTGEYMLGAVGQLQFEVFKHRMENEYNAEVVMNPMGKKTVRWISPDDLDERMSSSRNILAKDRFDQPVFLFENDFALRWFADKYPDVKLEEKM.

Residues K8–H268 form the tr-type G domain. Residues S17–T24, D85–H89, and N139–D142 contribute to the GTP site.

This sequence belongs to the TRAFAC class translation factor GTPase superfamily. Classic translation factor GTPase family. PrfC subfamily.

Its subcellular location is the cytoplasm. In terms of biological role, increases the formation of ribosomal termination complexes and stimulates activities of RF-1 and RF-2. It binds guanine nucleotides and has strong preference for UGA stop codons. It may interact directly with the ribosome. The stimulation of RF-1 and RF-2 is significantly reduced by GTP and GDP, but not by GMP. The chain is Peptide chain release factor 3 from Streptococcus sanguinis (strain SK36).